Reading from the N-terminus, the 123-residue chain is MGYRKLGRTSDQRKAMLRDLATSLIVSERIETTEARAKEVRSVVEKLITLGKKGDLASRRNAAKTLRNVEILNEDETTQTALQKLFGEIAERYTERQGGYTRILKVGPRRGDGAESVIIELVD.

This sequence belongs to the bacterial ribosomal protein bL17 family. As to quaternary structure, part of the 50S ribosomal subunit. Contacts protein L32.

This chain is Large ribosomal subunit protein bL17, found in Staphylococcus haemolyticus (strain JCSC1435).